The sequence spans 400 residues: Protein transport protein HofC homolog (400 aa).

3 consecutive transmembrane segments (helical) span residues 165 to 185 (YPII…HFVL), 209 to 229 (LADF…LLAI), and 370 to 390 (LLII…LPIF).

Belongs to the GSP F family.

The protein resides in the cell inner membrane. This chain is Protein transport protein HofC homolog (hofC), found in Escherichia coli (strain K12).